The following is a 341-amino-acid chain: Glycerol-3-phosphate dehydrogenase [NAD(P)+] (341 aa).

NADPH is bound by residues serine 15, tryptophan 16, arginine 36, and lysine 110. 3 residues coordinate sn-glycerol 3-phosphate: lysine 110, glycine 139, and serine 141. Residue alanine 143 coordinates NADPH. Residues lysine 194, aspartate 247, serine 257, arginine 258, and asparagine 259 each coordinate sn-glycerol 3-phosphate. Lysine 194 (proton acceptor) is an active-site residue. Position 258 (arginine 258) interacts with NADPH. NADPH is bound by residues valine 282 and glutamate 284.

It belongs to the NAD-dependent glycerol-3-phosphate dehydrogenase family.

It localises to the cytoplasm. The enzyme catalyses sn-glycerol 3-phosphate + NAD(+) = dihydroxyacetone phosphate + NADH + H(+). The catalysed reaction is sn-glycerol 3-phosphate + NADP(+) = dihydroxyacetone phosphate + NADPH + H(+). It participates in membrane lipid metabolism; glycerophospholipid metabolism. Catalyzes the reduction of the glycolytic intermediate dihydroxyacetone phosphate (DHAP) to sn-glycerol 3-phosphate (G3P), the key precursor for phospholipid synthesis. In Xanthomonas euvesicatoria pv. vesicatoria (strain 85-10) (Xanthomonas campestris pv. vesicatoria), this protein is Glycerol-3-phosphate dehydrogenase [NAD(P)+].